A 768-amino-acid polypeptide reads, in one-letter code: Protein transport protein Sec23A (768 aa).

Thr-2 bears the N-acetylthreonine mark. The Zn(2+) site is built by Cys-61, Cys-66, Cys-85, and Cys-88. A Phosphothreonine modification is found at Thr-308. A Gelsolin-like repeat occupies 632–718 (PEPVLLDSSS…EHGGSQARFL (87 aa)).

It belongs to the SEC23/SEC24 family. SEC23 subfamily. As to quaternary structure, COPII is composed of at least five proteins: the Sec23/24 complex, the Sec13/31 complex and Sar1. Interacts with SEC23IP. Interacts with HTR4. Interacts with SEC16A. Interacts with SLC6A4. Interacts (as part of the Sec23/24 complex) with SEC22B; recruits SEC22B into COPII-coated vesicles and allows the transport of this cargo from the endoplasmic reticulum to the Golgi. Interacts (via Gelsolin-like repeat) with MIA2 and MIA3; specifically involved in the transport of large cargos like the collagen COL7A1. Interacts with DDHD1. Interacts with TMEM39A. Interacts with SACM1L; this interaction is reduced in the absence of TMEM39A. Interacts with kinase FAM20C; transport of FAM20C from the endoplasmic reticulum to the Golgi is likely to be mediated by COPII vesicles.

It is found in the cytoplasmic vesicle. The protein localises to the COPII-coated vesicle membrane. It localises to the endoplasmic reticulum membrane. The protein resides in the cytoplasm. Its subcellular location is the cytosol. In terms of biological role, component of the coat protein complex II (COPII) which promotes the formation of transport vesicles from the endoplasmic reticulum (ER). The coat has two main functions, the physical deformation of the endoplasmic reticulum membrane into vesicles and the selection of cargo molecules for their transport to the Golgi complex. Required for the translocation of insulin-induced glucose transporter SLC2A4/GLUT4 to the cell membrane. The polypeptide is Protein transport protein Sec23A (Bos taurus (Bovine)).